The following is a 368-amino-acid chain: MNSIFRKIVFAAFLLLALPQFALAVRIKDIAAFDGVRENQLIGYGLVVGLNGTGDSDQTKFPVQSLVNTLERMGITINRADITVKNVAAVMVTAALPPFAKQGNSLDVLVSSVGDSKSLAGGTLLMTPLKGADSQIYAVAQGGVLTNSFSYGGQAASVQKNHPTAGRVPGGALVERELPNVLAGRSQLRLNLHQPDFTTASRVAAVINNKFKMTVASLTDPGSVQLAIPDDYQGKTVEFVAALERLEVTPDVMARVVLNERTGTIVIGENVRISTVAVSHGNLTLYVKETPRVSQPAPFSSTGETKVVPRTSIKVTEDRGSLAILQQGANIGDVVRALNALGVTPRDLIGIMQAIKAAGALNAELMVI.

The signal sequence occupies residues 1–24; it reads MNSIFRKIVFAAFLLLALPQFALA.

Belongs to the FlgI family. The basal body constitutes a major portion of the flagellar organelle and consists of four rings (L,P,S, and M) mounted on a central rod.

It localises to the periplasm. Its subcellular location is the bacterial flagellum basal body. Assembles around the rod to form the L-ring and probably protects the motor/basal body from shearing forces during rotation. This chain is Flagellar P-ring protein, found in Geotalea uraniireducens (strain Rf4) (Geobacter uraniireducens).